Here is a 412-residue protein sequence, read N- to C-terminus: ATP phosphoribosyltransferase regulatory subunit (412 aa).

It belongs to the class-II aminoacyl-tRNA synthetase family. HisZ subfamily. In terms of assembly, heteromultimer composed of HisG and HisZ subunits.

The protein localises to the cytoplasm. The protein operates within amino-acid biosynthesis; L-histidine biosynthesis; L-histidine from 5-phospho-alpha-D-ribose 1-diphosphate: step 1/9. Required for the first step of histidine biosynthesis. May allow the feedback regulation of ATP phosphoribosyltransferase activity by histidine. The polypeptide is ATP phosphoribosyltransferase regulatory subunit (Dehalococcoides mccartyi (strain ATCC BAA-2100 / JCM 16839 / KCTC 5957 / BAV1)).